A 356-amino-acid polypeptide reads, in one-letter code: uncharacterized protein (356 aa).

Its subcellular location is the cytoplasm. It is found in the nucleus. This is an uncharacterized protein from Saccharomyces cerevisiae (strain ATCC 204508 / S288c) (Baker's yeast).